Consider the following 220-residue polypeptide: Uracil phosphoribosyltransferase 2 (220 aa).

Residue A77–I80 coordinates GTP. Positions 87 and 113 each coordinate 5-phospho-alpha-D-ribose 1-diphosphate. R134 is a binding site for GTP. Residues D140 and D140–S148 each bind 5-phospho-alpha-D-ribose 1-diphosphate. A D-ribose 5-phosphate-binding site is contributed by Y204. Residues V205 and G210–F212 contribute to the uracil site. D211 is a binding site for 5-phospho-alpha-D-ribose 1-diphosphate.

The protein belongs to the UPRTase family. Requires Mg(2+) as cofactor.

The catalysed reaction is UMP + diphosphate = 5-phospho-alpha-D-ribose 1-diphosphate + uracil. It participates in pyrimidine metabolism; UMP biosynthesis via salvage pathway; UMP from uracil: step 1/1. Allosterically activated by GTP. Functionally, catalyzes the conversion of uracil and 5-phospho-alpha-D-ribose 1-diphosphate (PRPP) to UMP and diphosphate. This chain is Uracil phosphoribosyltransferase 2, found in Schizosaccharomyces pombe (strain 972 / ATCC 24843) (Fission yeast).